The following is a 691-amino-acid chain: Two-component response regulator ORR21 (691 aa).

A Response regulatory domain is found at 17–132 (KVLVVDDDPT…ELKNIWQHVI (116 aa)). Residue aspartate 68 is modified to 4-aspartylphosphate. Positions 139-155 (NKEHEHSGSLDDTDRTR) are enriched in basic and acidic residues. Residues 139–204 (NKEHEHSGSL…DPSSTSKKPR (66 aa)) are disordered. The segment at residues 199–258 (TSKKPRVVWSVELHQQFVNAVNHLGIDKAVPKKILELMNVPGLTRENVASHLQKFRLYLK) is a DNA-binding region (myb-like GARP).

It belongs to the ARR family. Type-B subfamily. In terms of processing, two-component system major event consists of a His-to-Asp phosphorelay between a sensor histidine kinase (HK) and a response regulator (RR). In plants, the His-to-Asp phosphorelay involves an additional intermediate named Histidine-containing phosphotransfer protein (HPt). This multistep phosphorelay consists of a His-Asp-His-Asp sequential transfer of a phosphate group between first a His and an Asp of the HK protein, followed by the transfer to a conserved His of the HPt protein and finally the transfer to an Asp in the receiver domain of the RR protein.

Its subcellular location is the nucleus. Transcriptional activator that binds specific DNA sequence. Functions as a response regulator involved in His-to-Asp phosphorelay signal transduction system. Phosphorylation of the Asp residue in the receiver domain activates the ability of the protein to promote the transcription of target genes. May directly activate some type-A response regulators in response to cytokinins. This is Two-component response regulator ORR21 from Oryza sativa subsp. japonica (Rice).